The following is a 124-amino-acid chain: UPF0231 protein Shewmr4_0656 (124 aa).

The protein belongs to the UPF0231 family.

The chain is UPF0231 protein Shewmr4_0656 from Shewanella sp. (strain MR-4).